The following is a 714-amino-acid chain: Polyribonucleotide nucleotidyltransferase (714 aa).

2 residues coordinate Mg(2+): aspartate 489 and aspartate 495. One can recognise a KH domain in the interval 556-615 (PKIDTIKIDVDKIKVVIGKGGETIDKIIAETGVKIDIDEEGNVSIYSSDQDAINRAKEII). The S1 motif domain occupies 625–693 (GEVYHAKVVR…DKGRIDASMK (69 aa)). The disordered stretch occupies residues 691–714 (SMKALVPRPPKPEKSEAKKEGKHD). Residues 700–714 (PKPEKSEAKKEGKHD) are compositionally biased toward basic and acidic residues.

This sequence belongs to the polyribonucleotide nucleotidyltransferase family. It depends on Mg(2+) as a cofactor.

The protein resides in the cytoplasm. The catalysed reaction is RNA(n+1) + phosphate = RNA(n) + a ribonucleoside 5'-diphosphate. Functionally, involved in mRNA degradation. Catalyzes the phosphorolysis of single-stranded polyribonucleotides processively in the 3'- to 5'-direction. This is Polyribonucleotide nucleotidyltransferase from Streptococcus equi subsp. zooepidemicus (strain MGCS10565).